The sequence spans 521 residues: Glucosidase 2 subunit beta (521 aa).

The N-terminal stretch at 1–14 (MLLLLLLLLPLCWA) is a signal peptide. Serine 24 bears the Phosphoserine mark. 2 LDL-receptor class A domains span residues 37–71 (FTCLDGTATIPFDQVNDDYCDCKDGSDEPGTAACP) and 69–113 (ACPN…TVCE). 2 disulfides stabilise this stretch: cysteine 39–cysteine 58 and cysteine 56–cysteine 70. A substrate-binding site is contributed by aspartate 49. 6 residues coordinate Ca(2+): glutamine 50, aspartate 53, tyrosine 55, aspartate 57, aspartate 63, and glutamate 64. Substrate is bound at residue aspartate 53. The N-linked (GlcNAc...) asparagine glycan is linked to asparagine 72. Cystine bridges form between cysteine 77-cysteine 99, cysteine 97-cysteine 112, and cysteine 100-cysteine 116. The residue at position 89 (serine 89) is a Phosphoserine; by PKC. Residues arginine 91, aspartate 94, valine 96, aspartate 98, aspartate 104, and glutamate 105 each contribute to the Ca(2+) site. Lysine 166 carries the post-translational modification N6-succinyllysine. Serine 168 is subject to Phosphoserine. EF-hand domains follow at residues 209 to 244 (REQERAASAFQELDDNMDGMVSLAELQTHPELDTDG) and 245 to 290 (DGAL…TDIP). Residues aspartate 222, asparagine 224, aspartate 226, methionine 228, and glutamate 233 each coordinate Ca(2+). Disordered stretches follow at residues 226 to 267 (DGMV…DTTS) and 280 to 350 (YRSE…EKMP). 2 stretches are compositionally biased toward acidic residues: residues 241–253 (DTDGDGALSEEEA) and 308–331 (TEEEEEEEEEPEEEEEEEEEEEEA). Residues 332-343 (PPPLQPPQPPSP) show a composition bias toward pro residues. A phosphoserine; by PKC mark is found at serine 376 and serine 383. The region spanning 406–507 (SQCYELTTNE…ELMTPAACPE (102 aa)) is the MRH domain. A disulfide bond links cysteine 408 and cysteine 421. Serine 427 is subject to Phosphoserine; by PKC. Cystine bridges form between cysteine 464/cysteine 493 and cysteine 478/cysteine 505. N-linked (GlcNAc...) asparagine glycosylation is present at asparagine 469. The Prevents secretion from ER motif lies at 518-521 (HDEL).

Heterodimer of a catalytic alpha subunit (GANAB) and a beta subunit (PRKCSH). Binds glycosylated PTPRC. As to expression, expressed in kidney (at protein level).

The protein resides in the endoplasmic reticulum. Its pathway is glycan metabolism; N-glycan metabolism. Regulatory subunit of glucosidase II that cleaves sequentially the 2 innermost alpha-1,3-linked glucose residues from the Glc(2)Man(9)GlcNAc(2) oligosaccharide precursor of immature glycoproteins. Required for efficient PKD1/Polycystin-1 biogenesis and trafficking to the plasma membrane of the primary cilia. The sequence is that of Glucosidase 2 subunit beta from Mus musculus (Mouse).